The chain runs to 126 residues: Fluoride-specific ion channel FluC (126 aa).

A run of 4 helical transmembrane segments spans residues 4-24 (FAILGFIALGGAFGACSRYLV), 38-58 (YGTLTVNVVGSFIMGLLIAAF), 71-91 (IIGLGFLGALTTFSTFSMDNV), and 104-124 (LNVVLNVTLSITAAWVGFQLL). Na(+)-binding residues include G78 and T81.

It belongs to the fluoride channel Fluc/FEX (TC 1.A.43) family.

The protein resides in the cell inner membrane. The enzyme catalyses fluoride(in) = fluoride(out). Na(+) is not transported, but it plays an essential structural role and its presence is essential for fluoride channel function. Fluoride-specific ion channel. Important for reducing fluoride concentration in the cell, thus reducing its toxicity. The sequence is that of Fluoride-specific ion channel FluC from Vibrio vulnificus (strain CMCP6).